The following is a 784-amino-acid chain: Lon protease (784 aa).

The region spanning 11 to 204 (IPVLPLRDVV…YLMAMMESEI (194 aa)) is the Lon N-terminal domain. 356–363 (GPPGVGKT) is an ATP binding site. Positions 592–773 (ENRVGQVTGL…EEVLTLALQN (182 aa)) constitute a Lon proteolytic domain. Catalysis depends on residues S679 and K722.

This sequence belongs to the peptidase S16 family. Homohexamer. Organized in a ring with a central cavity. ATP binding and hydrolysis do not affect the oligomeric state of the enzyme.

It is found in the cytoplasm. The catalysed reaction is Hydrolysis of proteins in presence of ATP.. Its activity is regulated as follows. Contains an allosteric site (distinct from its active site), whose occupancy by an unfolded polypeptide leads to enzyme activation. Its function is as follows. ATP-dependent serine protease that mediates the selective degradation of mutant and abnormal proteins as well as certain short-lived regulatory proteins. Required for cellular homeostasis and for survival from DNA damage and developmental changes induced by stress. Degrades polypeptides processively to yield small peptide fragments that are 5 to 10 amino acids long. Binds to DNA in a double-stranded, site-specific manner. Endogenous substrates include the regulatory proteins RcsA and SulA, the transcriptional activator SoxS, and UmuD. Its overproduction specifically inhibits translation through at least two different pathways, one of them being the YoeB-YefM toxin-antitoxin system. The polypeptide is Lon protease (Escherichia coli O6:H1 (strain CFT073 / ATCC 700928 / UPEC)).